The sequence spans 321 residues: MQCRLPRGLAGALLTLLCMGLLCLRYHLNLSPQRVQGTPELSQPNPGPPKLQLHDVFIAVKTTRAFHRLRLELLLDTWVSRTREQTFVFTDSPDKGLQERLGSHLVVTNCSAEHSHPALSCKMAAEFDTFLASGLRWFCHVDDDNYVNPRALLQLLRAFPLARDVYVGRPSLNRPIHASEPQPHNRTRLVQFWFATGGAGFCINRKLALKMAPWASGSRFMDTSALIRLPDDCTMGYIIECKLGGRLQPSPLFHSHLETLQLLRTAQLPEQVTLSYGVFEGKLNVIKLQGPFSPEEDPSRFRSLHCLLYPDTPWCPQLGAR.

Residues Met-1–Arg-7 lie on the Cytoplasmic side of the membrane. Residues Gly-8 to His-27 form a helical; Signal-anchor for type II membrane protein membrane-spanning segment. Over Leu-28–Arg-321 the chain is Lumenal. Position 70 (Arg-70) interacts with substrate. N-linked (GlcNAc...) asparagine glycosylation is present at Asn-109. 2 cysteine pairs are disulfide-bonded: Cys-110/Cys-121 and Cys-139/Cys-202. Residue Asp-143 participates in substrate binding. Asp-144 contacts Mn(2+). N-linked (GlcNAc...) asparagine glycosylation occurs at Asn-185. Asp-232 is a catalytic residue. Position 256 (His-256) interacts with Mn(2+). A disulfide bond links Cys-306 and Cys-315.

This sequence belongs to the glycosyltransferase 31 family. Requires Mn(2+) as cofactor.

It is found in the golgi apparatus membrane. The catalysed reaction is 3-O-(alpha-L-fucosyl)-L-threonyl-[EGF-like domain protein] + UDP-N-acetyl-alpha-D-glucosamine = 3-O-(N-acetyl-beta-D-glucosaminyl-(1-&gt;3)-alpha-L-fucosyl)-L-threonyl-[EGF-like domain protein] + UDP + H(+). It carries out the reaction 3-O-(alpha-L-fucosyl)-L-seryl-[EGF-like domain protein] + UDP-N-acetyl-alpha-D-glucosamine = 3-O-(N-acetyl-beta-D-glucosaminyl-(1-&gt;3)-alpha-L-fucosyl)-L-seryl-[EGF-like domain protein] + UDP + H(+). In terms of biological role, glycosyltransferase that initiates the elongation of O-linked fucose residues attached to EGF-like repeats in the extracellular domain of Notch molecules. Modulates NOTCH1 activity by modifying O-fucose residues at specific EGF-like domains resulting in inhibition of NOTCH1 activation by JAG1 and enhancement of NOTCH1 activation by DLL1 via an increase in its binding to DLL1. This chain is Beta-1,3-N-acetylglucosaminyltransferase manic fringe, found in Homo sapiens (Human).